Reading from the N-terminus, the 307-residue chain is MAIIGPTGTGKSQLALDVAERLGPLGAEIVNADAMQLYRGMDIGTAKLPVDARRGIPHHQLDVLDVTQTATVARYQRAAAADIEAILAAGAVPIIVGGSMLYIQSLLDDWSFPATDPRVRARWERRLAEVGVGELHAELARRDPAAAAAILPTDARRTVRALEVIELTGRPFAASAPRIGAPRWDTVIIGLDCDTTVLDERLARRTDAMFEQGLVAEVTGLLGRGLRDGVTAARALGYAQVIAALDAGGGDEQLRQAREQTYAGTRRYVRRQRSWFRRDHRVRWLDAGACSPPRLVDAALGAWRHVS.

5 to 12 (GPTGTGKS) contributes to the ATP binding site. 7–12 (TGTGKS) contacts substrate.

The protein belongs to the IPP transferase family. Monomer. It depends on Mg(2+) as a cofactor.

The enzyme catalyses adenosine(37) in tRNA + dimethylallyl diphosphate = N(6)-dimethylallyladenosine(37) in tRNA + diphosphate. Its function is as follows. Catalyzes the transfer of a dimethylallyl group onto the adenine at position 37 in tRNAs that read codons beginning with uridine, leading to the formation of N6-(dimethylallyl)adenosine (i(6)A). This Mycobacterium avium (strain 104) protein is tRNA dimethylallyltransferase.